The primary structure comprises 468 residues: Serine/threonine-protein phosphatase 2A 55 kDa regulatory subunit B beta isoform (468 aa).

WD repeat units follow at residues 47–86 (SSAD…KNQP), 112–153 (EIEE…KRPE), 196–234 (AHTY…RSFN), 245–285 (ELTE…LCDK), 304–342 (EIIS…RPIE), 359–400 (ENDC…DVTL), and 435–468 (DFSK…DKVN).

The protein belongs to the phosphatase 2A regulatory subunit B family. In terms of assembly, PP2A consists of a common heterodimeric core enzyme, composed of a 36 kDa catalytic subunit (subunit C) and a 65 kDa constant regulatory subunit (PR65 or subunit A), that associates with a variety of regulatory subunits.

It is found in the cytoplasm. The protein resides in the cytoskeleton. It localises to the membrane. The B regulatory subunit might modulate substrate selectivity and catalytic activity, and might also direct the localization of the catalytic enzyme to a particular subcellular compartment. Negatively controls the initiation of oocyte maturation. In Xenopus laevis (African clawed frog), this protein is Serine/threonine-protein phosphatase 2A 55 kDa regulatory subunit B beta isoform (ppp2r2b).